Here is a 1377-residue protein sequence, read N- to C-terminus: Pleckstrin homology-like domain family B member 1 (1377 aa).

Residue Ser-51 is modified to Phosphoserine. The FHA domain maps to 64–125; the sequence is TVIGSAARDI…LTQGCMLCLG (62 aa). Arg-131 carries the asymmetric dimethylarginine modification. Positions 150-187 are disordered; the sequence is RAPGPPYSPVPAESESLVNGNHTPQTATRGPSACASHS. The span at 165-178 shows a compositional bias: polar residues; the sequence is SLVNGNHTPQTATR. Phosphoserine is present on residues Ser-192, Ser-220, and Ser-223. Disordered stretches follow at residues 211 to 334 and 370 to 535; these read AAGK…LTDS and GALS…GSFS. The span at 252–273 shows a compositional bias: low complexity; sequence SPAFSPLSSPASSGSCASHSPS. A compositionally biased stretch (polar residues) spans 288–303; it reads RSSSYHLALQPPQSRP. Residues 309–322 are compositionally biased toward basic and acidic residues; that stretch reads ESPRLSRKGGHERP. Ser-324, Ser-334, Ser-381, Ser-404, Ser-430, Ser-443, Ser-461, Ser-470, Ser-489, and Ser-501 each carry phosphoserine. Low complexity predominate over residues 456-473; it reads ELPPLSPSLSRRALSPLP. A compositionally biased stretch (basic and acidic residues) spans 481 to 491; the sequence is KLNREVAESPR. Arg-512 is subject to Omega-N-methylarginine. A phosphoserine mark is found at Ser-518 and Ser-520. Thr-522 is subject to Phosphothreonine. Phosphoserine occurs at positions 533, 539, 551, 555, 563, 578, and 583. Positions 653–663 are enriched in low complexity; it reads PSRGLAGASGR. 3 disordered regions span residues 653–707, 936–1019, and 1119–1138; these read PSRG…APST, TGPA…GSLP, and SMET…DNMS. Basic and acidic residues predominate over residues 677 to 691; it reads ESMERSDEENLKEEC. Ser-678 is subject to Phosphoserine. Residues 683–809 are a coiled coil; sequence DEENLKEECS…TETKLFEDLE (127 aa). A phosphoserine mark is found at Ser-971 and Ser-1017. The segment covering 971–992 has biased composition (low complexity); it reads SPLPRTRSGPLPSSSGSSSSSS. Residues 1009-1018 show a composition bias toward polar residues; it reads LLTQNGTGSL. Positions 1144–1208 form a coiled coil; the sequence is DMGKIEEMEK…ARRQQLVEKE (65 aa). One can recognise a PH domain in the interval 1256–1370; the sequence is SKVCRGYLVK…WMDVIVTGAE (115 aa).

The chain is Pleckstrin homology-like domain family B member 1 (PHLDB1) from Homo sapiens (Human).